A 664-amino-acid polypeptide reads, in one-letter code: 26S rRNA (cytosine-C(5))-methyltransferase nsun-1 (664 aa).

The disordered stretch occupies residues 1–105 (MAIVKKKKVS…DDSDAGDHLP (105 aa)). Residues 38–52 (PKKKKLVKKVKKSAK) show a composition bias toward basic residues. Over residues 53-68 (KAHEEEPIEQVEKLQL) the composition is skewed to basic and acidic residues. The segment covering 84 to 99 (SDDEDLRDDYSDDDSD) has biased composition (acidic residues). S-adenosyl-L-methionine-binding positions include 313–319 (CSAPGGK), aspartate 337, and aspartate 382. Cysteine 439 (nucleophile) is an active-site residue. Residues 513 to 664 (KMSKQGVMEK…RRKKMLAKQQ (152 aa)) are disordered. A compositionally biased stretch (basic and acidic residues) spans 519–528 (VMEKEKEKAA). The segment covering 541 to 550 (EASESSDDEE) has biased composition (acidic residues). Basic residues predominate over residues 563 to 572 (KPAKKQQQKK). A compositionally biased stretch (basic and acidic residues) spans 606–618 (KAAEKQAAVKEDD). Composition is skewed to basic residues over residues 627 to 644 (KRAK…KRAA) and 652 to 664 (VKNR…AKQQ).

It belongs to the class I-like SAM-binding methyltransferase superfamily. RsmB/NOP family.

It localises to the nucleus. Its subcellular location is the nucleolus. It catalyses the reaction a cytidine in 26S rRNA + S-adenosyl-L-methionine = a 5-methylcytidine in 26S rRNA + S-adenosyl-L-homocysteine + H(+). In terms of biological role, methyltransferase which methylates the carbon-5 position of cytosine 2982 to 5-methylcytosine (m5C2982) in 26S rRNA. May play a role in the translation of leucine and proline codons. May be required for the translation of specific mRNAs such as mRNAs involved in gonad development, collagen production and cuticle integrity. Plays a role in ensuring the correct localization of the germline-specific protein gld-1 during development. Not required for pre-rRNA processing, the production of mature 5S, 5.8S, 18S or 26S rRNAs or global translation. Plays a role in positively regulating fertility. The polypeptide is 26S rRNA (cytosine-C(5))-methyltransferase nsun-1 (Caenorhabditis elegans).